Here is a 384-residue protein sequence, read N- to C-terminus: Dual-specificity RNA methyltransferase RlmN (384 aa).

Glu-105 (proton acceptor) is an active-site residue. In terms of domain architecture, Radical SAM core spans 111-350; sequence EDDRATLCVS…TIVRKTRGDD (240 aa). A disulfide bond links Cys-118 and Cys-355. [4Fe-4S] cluster-binding residues include Cys-125, Cys-129, and Cys-132. S-adenosyl-L-methionine-binding positions include 179–180, Ser-211, 233–235, and Asn-312; these read GE and SLH. The active-site S-methylcysteine intermediate is Cys-355.

This sequence belongs to the radical SAM superfamily. RlmN family. [4Fe-4S] cluster serves as cofactor.

Its subcellular location is the cytoplasm. It carries out the reaction adenosine(2503) in 23S rRNA + 2 reduced [2Fe-2S]-[ferredoxin] + 2 S-adenosyl-L-methionine = 2-methyladenosine(2503) in 23S rRNA + 5'-deoxyadenosine + L-methionine + 2 oxidized [2Fe-2S]-[ferredoxin] + S-adenosyl-L-homocysteine. The enzyme catalyses adenosine(37) in tRNA + 2 reduced [2Fe-2S]-[ferredoxin] + 2 S-adenosyl-L-methionine = 2-methyladenosine(37) in tRNA + 5'-deoxyadenosine + L-methionine + 2 oxidized [2Fe-2S]-[ferredoxin] + S-adenosyl-L-homocysteine. Functionally, specifically methylates position 2 of adenine 2503 in 23S rRNA and position 2 of adenine 37 in tRNAs. m2A2503 modification seems to play a crucial role in the proofreading step occurring at the peptidyl transferase center and thus would serve to optimize ribosomal fidelity. This chain is Dual-specificity RNA methyltransferase RlmN, found in Escherichia coli O6:H1 (strain CFT073 / ATCC 700928 / UPEC).